The sequence spans 579 residues: Mycobactin import ATP-binding/permease protein IrtB (579 aa).

The Cytoplasmic portion of the chain corresponds to 1-16 (MIRTWIALVPNDHRAR). A helical membrane pass occupies residues 17–37 (LIGFALLAFCSVVARAVGTVL). The ABC transmembrane type-1 domain maps to 17–299 (LIGFALLAFC…VSELAPALES (283 aa)). Over 38–52 (LVPLMAALFGEAPQR) the chain is Periplasmic. A helical transmembrane segment spans residues 53–73 (AWLWLGWLSAATVAGWVLDAV). The Cytoplasmic portion of the chain corresponds to 74–123 (TARIGIELGFAVLNHTQHDVADRLPVVRLDWFTAENTATARQAIAATGPE). Residues 124-146 (LVGLVVNLVTPLTSAILLPAVIA) form a helical membrane-spanning segment. The Periplasmic segment spans residues 147 to 155 (LALLPISWQ). Residues 156–178 (LGVAALAGVPLLLGALWASAAFA) traverse the membrane as a helical segment. Residues 179–237 (RRADTAADKANTALTERIIEFARTQQALRAARRVEPARSLVGNALASQHTATMRLLGMQ) are Cytoplasmic-facing. Residues 238 to 258 (IPGQLLFSIASQLALIVLAGT) traverse the membrane as a helical segment. At 259-579 (TAALTITGTL…EAAEWQILAE (321 aa)) the chain is on the periplasmic side. Positions 332 to 567 (IEFDDVAFGY…GGRFSQFWRQ (236 aa)) constitute an ABC transporter domain. 366 to 373 (GPSGCGKS) provides a ligand contact to ATP.

The protein belongs to the ABC transporter superfamily. Siderophore-Fe(3+) uptake transporter (SIUT) (TC 3.A.1.21) family. As to quaternary structure, forms a heterodimer with IrtA.

It localises to the cell inner membrane. Its function is as follows. Part of the ABC transporter complex IrtAB involved in the import of iron-bound mycobactin (Fe-MBT) and carboxymycobactin (Fe-cMBT). Transmembrane domains (TMD) form a pore in the membrane and the ATP-binding domain (NBD) is responsible for energy generation. The chain is Mycobactin import ATP-binding/permease protein IrtB (irtB) from Mycobacterium bovis (strain ATCC BAA-935 / AF2122/97).